We begin with the raw amino-acid sequence, 410 residues long: Argininosuccinate synthase (410 aa).

ATP contacts are provided by residues 13–21 (AYSGGLDTS) and A40. The L-citrulline site is built by Y91 and S96. G121 provides a ligand contact to ATP. Residues T123, N127, and D128 each coordinate L-aspartate. N127 is an L-citrulline binding site. The L-citrulline site is built by R131, S182, S191, E267, and Y279.

Belongs to the argininosuccinate synthase family. Type 1 subfamily. As to quaternary structure, homotetramer.

It is found in the cytoplasm. It carries out the reaction L-citrulline + L-aspartate + ATP = 2-(N(omega)-L-arginino)succinate + AMP + diphosphate + H(+). It functions in the pathway amino-acid biosynthesis; L-arginine biosynthesis; L-arginine from L-ornithine and carbamoyl phosphate: step 2/3. This Maricaulis maris (strain MCS10) (Caulobacter maris) protein is Argininosuccinate synthase.